Consider the following 1812-residue polypeptide: Breast cancer type 1 susceptibility protein homolog (1812 aa).

M1 carries the post-translational modification N-acetylmethionine. Residues 24 to 65 (CPICLELIKEPVSTKCDHIFCKFCMLKLLNQKKGPSQCPLCK) form an RING-type zinc finger. A Glycyl lysine isopeptide (Lys-Gly) (interchain with G-Cter in SUMO2) cross-link involves residue K109. S114 carries the post-translational modification Phosphoserine. Positions 165–176 (KKNRQTQPRKKS) are enriched in basic residues. Residues 165–198 (KKNRQTQPRKKSVYIELDSDSSEETVTKPGDCSV) form a disordered region. Residue K298 forms a Glycyl lysine isopeptide (Lys-Gly) (interchain with G-Cter in SUMO2) linkage. The span at 321–332 (SKGTCNDRQVPS) shows a compositional bias: polar residues. Residues 321–362 (SKGTCNDRQVPSTGEKVGPNADSLSDREKWTHPQSLCPENSG) form a disordered region. Residue K336 forms a Glycyl lysine isopeptide (Lys-Gly) (interchain with G-Cter in SUMO2) linkage. The segment covering 352–362 (HPQSLCPENSG) has biased composition (polar residues). S392 bears the Phosphoserine mark. Glycyl lysine isopeptide (Lys-Gly) (interchain with G-Cter in SUMO2) cross-links involve residues K440, K456, and K512. Disordered stretches follow at residues 492–581 (PFTN…AKSI) and 640–767 (SEET…VSDT). A compositionally biased stretch (polar residues) spans 538-556 (QAVSTTSNCQENKIAGSNL). Composition is skewed to basic and acidic residues over residues 557–572 (QKEK…RKEP) and 669–679 (ADAKKNEPNEH). Residues S686, S706, and S717 each carry the phosphoserine modification. Polar residues-rich tracts occupy residues 702–733 (TSCS…QMSD) and 758–767 (STSVSLVSDT). Phosphoserine is present on S831. 5 disordered regions span residues 864-899 (KPRS…GQEE), 947-995 (GLSA…STEM), 1030-1056 (VCST…PPLD), 1147-1185 (RESS…EDED), and 1205-1230 (CSSA…SSSD). Positions 947-972 (GLSATGKSGISQNSHFKQSVSPIRSS) are enriched in polar residues. S971 is subject to Phosphoserine; by CHEK2. Basic and acidic residues predominate over residues 973–991 (IKTDNRKPLTEGRFERHTS). Residue S992 is modified to Phosphoserine. Residue K1048 forms a Glycyl lysine isopeptide (Lys-Gly) (interchain with G-Cter in SUMO2) linkage. Residues 1151 to 1166 (RSPSPVTHASKSQSLH) are compositionally biased toward polar residues. Phosphoserine occurs at positions 1152, 1154, 1174, and 1180. Residues 1175–1185 (SEESDSTEDED) show a composition bias toward acidic residues. A Phosphoserine modification is found at S1241. A disordered region spans residues 1244–1289 (HQFSEDPRCSGSMFSSQHSAAQGSTANANSQDSNFIPPSKQRSHQC). Residues 1255–1279 (SMFSSQHSAAQGSTANANSQDSNFI) are compositionally biased toward polar residues. A phosphoserine mark is found at S1297 and S1303. Residues 1313 to 1323 (EEDNDQEEDSI) are compositionally biased toward acidic residues. Positions 1313 to 1343 (EEDNDQEEDSIIPDSEASGYESETNLSEDCS) are disordered. Polar residues predominate over residues 1333 to 1343 (ESETNLSEDCS). S1343 carries the post-translational modification Phosphoserine. T1350 carries the post-translational modification Phosphothreonine. Residues 1353 to 1380 (RATMKYNLIKLQQEMAHLEAVLEQRGNQ) form an interaction with PALB2 region. 3 positions are modified to phosphoserine: S1413, S1481, and S1495. Residues 1437–1547 (HLEGPTSGDD…AHIGTTPAST (111 aa)) are disordered. Positions 1492 to 1504 (EASSEPHNSTGQS) are enriched in polar residues. Positions 1527-1538 (RDPESESPKEPA) are enriched in basic and acidic residues. 2 BRCT domains span residues 1585–1679 (SEER…EFEV) and 1698–1797 (SREK…AYLV).

As to quaternary structure, heterodimer with BARD1. Part of the BRCA1-associated genome surveillance complex (BASC), which contains BRCA1, MSH2, MSH6, MLH1, ATM, BLM, PMS2 and the MRE11-RAD50-NBN protein (MRN) complex. This association could be a dynamic process changing throughout the cell cycle and within subnuclear domains. Component of the BRCA1-A complex, at least composed of BRCA1, BARD1, UIMC1/RAP80, ABRAXAS1, BRCC3/BRCC36, BABAM2 and BABAM1/NBA1. Interacts (via the BRCT domains) with ABRAXAS1 (phosphorylated form); this is important for recruitment to sites of DNA damage. Can form a heterotetramer with two molecules of ABRAXAS1 (phosphorylated form). Component of the BRCA1-RBBP8 complex. Interacts (via the BRCT domains) with RBBP8 ('Ser-327' phosphorylated form); the interaction ubiquitinates RBBP8, regulates CHEK1 activation, and involves RBBP8 in BRCA1-dependent G2/M checkpoint control on DNA damage. Associates with RNA polymerase II holoenzyme. Interacts with SMC1A, NELFB, DCLRE1C, CLSPN. CHEK1, CHEK2, BAP1, BRCC3, UBXN1 and PCLAF. Interacts (via BRCT domains) with BRIP1 (phosphorylated form). Interacts with FANCD2 (ubiquitinated form). Interacts with H2AX (phosphorylated on 'Ser-140'). Interacts (via the BRCT domains) with ACACA (phosphorylated form); the interaction prevents dephosphorylation of ACACA. Part of a BRCA complex containing BRCA1, BRCA2 and PALB2. Interacts directly with PALB2; the interaction is essential for its function in HRR. Interacts directly with BRCA2; the interaction occurs only in the presence of PALB2 which serves as the bridging protein. Interacts (via the BRCT domains) with LMO4; the interaction represses the transcriptional activity of BRCA1. Interacts (via the BRCT domains) with CCAR2 (via N-terminus); the interaction represses the transcriptional activator activity of BRCA1. Interacts with EXD2. Interacts (via C-terminus) with DHX9; this interaction is direct and links BRCA1 to the RNA polymerase II holoenzyme. Interacts with DNA helicase ZGRF1; the interaction is increased following DNA damage induction. Post-translationally, phosphorylated in response to IR, UV, and various stimuli that cause checkpoint activation, probably by ATM or ATR. Phosphorylation at Ser-971 by CHEK2 regulates mitotic spindle assembly. Phosphorylation by AURKA regulates centrosomal microtubule nucleation. Autoubiquitinated, undergoes 'Lys-6'-linked polyubiquitination. 'Lys-6'-linked polyubiquitination does not promote degradation. As to expression, in the embryo, expressed in otic vesicles at day 9.5. At day 10.5, this expression decreases and high levels are found in the neuroectoderm. At days 11-12.5, high levels in differentiating keratinocytes and whisker pad primordia. At days 14-17, expression also observed in kidney epithelial cells. In the adult, highest levels found in spleen, thymus, lymph nodes, epithelial organs, and alveolar and ductal epithelial cells of the mammary gland. Very low levels in brain, kidney, and skin. No expression in heart, liver or lung.

It is found in the nucleus. The protein localises to the chromosome. The protein resides in the cytoplasm. It catalyses the reaction S-ubiquitinyl-[E2 ubiquitin-conjugating enzyme]-L-cysteine + [acceptor protein]-L-lysine = [E2 ubiquitin-conjugating enzyme]-L-cysteine + N(6)-ubiquitinyl-[acceptor protein]-L-lysine.. It functions in the pathway protein modification; protein ubiquitination. Its function is as follows. E3 ubiquitin-protein ligase that specifically mediates the formation of 'Lys-6'-linked polyubiquitin chains and plays a central role in DNA repair by facilitating cellular responses to DNA damage. It is unclear whether it also mediates the formation of other types of polyubiquitin chains. The BRCA1-BARD1 heterodimer coordinates a diverse range of cellular pathways such as DNA damage repair, ubiquitination and transcriptional regulation to maintain genomic stability. Regulates centrosomal microtubule nucleation. Required for appropriate cell cycle arrests after ionizing irradiation in both the S-phase and the G2 phase of the cell cycle. Required for FANCD2 targeting to sites of DNA damage. Inhibits lipid synthesis by binding to inactive phosphorylated ACACA and preventing its dephosphorylation. Contributes to homologous recombination repair (HRR) via its direct interaction with PALB2, fine-tunes recombinational repair partly through its modulatory role in the PALB2-dependent loading of BRCA2-RAD51 repair machinery at DNA breaks. Component of the BRCA1-RBBP8 complex which regulates CHEK1 activation and controls cell cycle G2/M checkpoints on DNA damage via BRCA1-mediated ubiquitination of RBBP8. Acts as a transcriptional activator. The polypeptide is Breast cancer type 1 susceptibility protein homolog (Brca1) (Mus musculus (Mouse)).